We begin with the raw amino-acid sequence, 356 residues long: 1-deoxy-D-xylulose 5-phosphate reductoisomerase (356 aa).

NADPH contacts are provided by Thr7, Gly8, Ser9, Ile10, Gly31, Asn33, and Asn111. Lys112 provides a ligand contact to 1-deoxy-D-xylulose 5-phosphate. Glu113 is an NADPH binding site. Residue Asp131 participates in Mn(2+) binding. The 1-deoxy-D-xylulose 5-phosphate site is built by Ser132, Glu133, Ser155, and His178. Residue Glu133 coordinates Mn(2+). Gly184 is an NADPH binding site. 4 residues coordinate 1-deoxy-D-xylulose 5-phosphate: Ser191, Asn196, Lys197, and Glu200. Mn(2+) is bound at residue Glu200.

It belongs to the DXR family. Mg(2+) serves as cofactor. Requires Mn(2+) as cofactor.

It catalyses the reaction 2-C-methyl-D-erythritol 4-phosphate + NADP(+) = 1-deoxy-D-xylulose 5-phosphate + NADPH + H(+). Its pathway is isoprenoid biosynthesis; isopentenyl diphosphate biosynthesis via DXP pathway; isopentenyl diphosphate from 1-deoxy-D-xylulose 5-phosphate: step 1/6. Functionally, catalyzes the NADPH-dependent rearrangement and reduction of 1-deoxy-D-xylulose-5-phosphate (DXP) to 2-C-methyl-D-erythritol 4-phosphate (MEP). The chain is 1-deoxy-D-xylulose 5-phosphate reductoisomerase from Campylobacter jejuni (strain RM1221).